Reading from the N-terminus, the 162-residue chain is NADH-quinone oxidoreductase subunit I (162 aa).

4Fe-4S ferredoxin-type domains follow at residues 53–83 and 93–122; these read LRRYPNGEERCIACKLCEAVCPALAITIESE and TRYDIDLIKCIFCGFCEEACPVDAIVETRV. Positions 63, 66, 69, 73, 102, 105, 108, and 112 each coordinate [4Fe-4S] cluster.

It belongs to the complex I 23 kDa subunit family. In terms of assembly, NDH-1 is composed of 14 different subunits. Subunits NuoA, H, J, K, L, M, N constitute the membrane sector of the complex. It depends on [4Fe-4S] cluster as a cofactor.

It localises to the cell inner membrane. It catalyses the reaction a quinone + NADH + 5 H(+)(in) = a quinol + NAD(+) + 4 H(+)(out). Functionally, NDH-1 shuttles electrons from NADH, via FMN and iron-sulfur (Fe-S) centers, to quinones in the respiratory chain. The immediate electron acceptor for the enzyme in this species is believed to be ubiquinone. Couples the redox reaction to proton translocation (for every two electrons transferred, four hydrogen ions are translocated across the cytoplasmic membrane), and thus conserves the redox energy in a proton gradient. The polypeptide is NADH-quinone oxidoreductase subunit I (Nitrosomonas eutropha (strain DSM 101675 / C91 / Nm57)).